Consider the following 245-residue polypeptide: rRNA adenine N-6-methyltransferase (245 aa).

Residues N10, L12, G37, E58, D83, and S100 each coordinate S-adenosyl-L-methionine.

The protein belongs to the class I-like SAM-binding methyltransferase superfamily. rRNA adenine N(6)-methyltransferase family.

The catalysed reaction is adenosine(2085) in 23S rRNA + 2 S-adenosyl-L-methionine = N(6)-dimethyladenosine(2085) in 23S rRNA + 2 S-adenosyl-L-homocysteine + 2 H(+). In terms of biological role, this protein produces a dimethylation of the adenine residue at position 2085 in 23S rRNA, resulting in reduced affinity between ribosomes and macrolide-lincosamide-streptogramin B antibiotics. The polypeptide is rRNA adenine N-6-methyltransferase (ermBP) (Clostridium perfringens).